A 98-amino-acid polypeptide reads, in one-letter code: Acylphosphatase (98 aa).

One can recognise an Acylphosphatase-like domain in the interval 12–98 (TYYVRVRGVV…EKRFERFQQQ (87 aa)). Catalysis depends on residues R27 and N45.

It belongs to the acylphosphatase family.

It carries out the reaction an acyl phosphate + H2O = a carboxylate + phosphate + H(+). This is Acylphosphatase (acyP) from Burkholderia cenocepacia (strain HI2424).